Consider the following 257-residue polypeptide: Protein LigF (257 aa).

In terms of domain architecture, GST N-terminal spans 1–82 (MTLKLYSFGP…YLEDVFPESG (82 aa)). A GST C-terminal domain is found at 89–257 (DPFKRAEMRV…LLKRQNEKVA (169 aa)).

Belongs to the GST superfamily.

Its function is as follows. Lignin degradation enzyme. The chain is Protein LigF (ligF) from Sphingobium sp. (strain NBRC 103272 / SYK-6).